A 385-amino-acid chain; its full sequence is MAFRKSNVYLSLVNSYTIDSPQPSSINYWWKMGSLLGLCLVIQIVTGIFMAMHYSSNIELAFSSVEHIMRDVHSGYILRYLHANGASFFFMVMFMHMAKGLYYGSYRSPRVTLWNVGVIIFILTIATAFLGYCCVYGQMSHWGATVITNLFSAIPFVGNDIVSWLWGGFSVSNPTIQRFFALHYLVPFIIAAMVIMHLMALHIHGSSNPLGITGNLDRIPMHSYFIFKDLVTVFLFMLILALFVFYSPNTLGHPDNYIPGNPLVTPASIVPEWYLLPFYAILRSIPDKLLGVITMFAAILVLLVLPFTDRSVVRGNTFKVLSKFFFFIFVFNFVLLGQIGACHVEVPYVLMGQIATFIYFAYFLIIVPVISTIENVLFYIGRVNK.

The next 4 membrane-spanning stretches (helical) occupy residues M32–M52, Y76–A98, L113–C133, and F179–M199. Heme b-binding residues include H82 and H96. Heme b contacts are provided by H183 and H197. H202 lines the a ubiquinone pocket. Transmembrane regions (helical) follow at residues F225–F245, L289–D309, L321–A341, and Y348–P368.

Belongs to the cytochrome b family. In terms of assembly, fungal cytochrome b-c1 complex contains 10 subunits; 3 respiratory subunits, 2 core proteins and 5 low-molecular weight proteins. Cytochrome b-c1 complex is a homodimer. Heme b serves as cofactor.

It localises to the mitochondrion inner membrane. In terms of biological role, component of the ubiquinol-cytochrome c reductase complex (complex III or cytochrome b-c1 complex) that is part of the mitochondrial respiratory chain. The b-c1 complex mediates electron transfer from ubiquinol to cytochrome c. Contributes to the generation of a proton gradient across the mitochondrial membrane that is then used for ATP synthesis. This chain is Cytochrome b (COB), found in Saccharomyces paradoxus (Yeast).